The sequence spans 339 residues: MLYSLAQKFMFQMDAEQAHDLAIKSLKFTANSPLACGYSQALQSSPVNCMGITFPNPVGLAAGLDKDGEAIDAFHAMGFGFVEVGTVTPKPQAGNDKPRLFRLTKAKAIINRMGFNNKGVDNLVRNLQAKKTDILVGVNIGKNKDTPVEQGKDDYLICMDKVYPYAAYITVNISSPNTPGLRTMQYGALLDELLASIKAKQAELAEKYHRYVPVALKIAPDLTADEIESIAMSLISNQFDAVIATNTTLSRDGVEGMTHGTEMGGLSGAPLTAASTMVIKQLASFLNKKIPIIGVGGINSAQDALDKFDAGANLVQIYSGFIYQGPKIIKEIVNAVKMK.

Residues 62-66 (AGLDK) and threonine 86 contribute to the FMN site. A substrate-binding site is contributed by lysine 66. 111–115 (NRMGF) contributes to the substrate binding site. Asparagine 139 and asparagine 172 together coordinate FMN. Asparagine 172 provides a ligand contact to substrate. Serine 175 functions as the Nucleophile in the catalytic mechanism. Asparagine 177 lines the substrate pocket. Residues lysine 217 and threonine 245 each coordinate FMN. 246 to 247 (NT) contacts substrate. FMN contacts are provided by residues glycine 268, glycine 297, and 318 to 319 (YS).

The protein belongs to the dihydroorotate dehydrogenase family. Type 2 subfamily. As to quaternary structure, monomer. The cofactor is FMN.

Its subcellular location is the cell membrane. It catalyses the reaction (S)-dihydroorotate + a quinone = orotate + a quinol. Its pathway is pyrimidine metabolism; UMP biosynthesis via de novo pathway; orotate from (S)-dihydroorotate (quinone route): step 1/1. In terms of biological role, catalyzes the conversion of dihydroorotate to orotate with quinone as electron acceptor. This is Dihydroorotate dehydrogenase (quinone) from Shewanella denitrificans (strain OS217 / ATCC BAA-1090 / DSM 15013).